The following is a 152-amino-acid chain: Ribosome maturation factor RimP (152 aa).

It belongs to the RimP family.

It localises to the cytoplasm. Required for maturation of 30S ribosomal subunits. The chain is Ribosome maturation factor RimP from Ruminiclostridium cellulolyticum (strain ATCC 35319 / DSM 5812 / JCM 6584 / H10) (Clostridium cellulolyticum).